The following is a 211-amino-acid chain: Uridine kinase (211 aa).

G12 to T19 contacts ATP.

It belongs to the uridine kinase family.

The protein resides in the cytoplasm. The catalysed reaction is uridine + ATP = UMP + ADP + H(+). It catalyses the reaction cytidine + ATP = CMP + ADP + H(+). It functions in the pathway pyrimidine metabolism; CTP biosynthesis via salvage pathway; CTP from cytidine: step 1/3. It participates in pyrimidine metabolism; UMP biosynthesis via salvage pathway; UMP from uridine: step 1/1. In Bacillus licheniformis (strain ATCC 14580 / DSM 13 / JCM 2505 / CCUG 7422 / NBRC 12200 / NCIMB 9375 / NCTC 10341 / NRRL NRS-1264 / Gibson 46), this protein is Uridine kinase.